Here is a 282-residue protein sequence, read N- to C-terminus: DegV domain-containing protein M6_Spy0690 (282 aa).

Residues 3 to 280 (LAVITDSTAT…EGAIAFGVTP (278 aa)) enclose the DegV domain. Hexadecanoate contacts are provided by threonine 61 and serine 94.

May bind long-chain fatty acids, such as palmitate, and may play a role in lipid transport or fatty acid metabolism. The chain is DegV domain-containing protein M6_Spy0690 from Streptococcus pyogenes serotype M6 (strain ATCC BAA-946 / MGAS10394).